The sequence spans 156 residues: Small ribosomal subunit protein uS7 (156 aa).

It belongs to the universal ribosomal protein uS7 family. Part of the 30S ribosomal subunit. Contacts proteins S9 and S11.

In terms of biological role, one of the primary rRNA binding proteins, it binds directly to 16S rRNA where it nucleates assembly of the head domain of the 30S subunit. Is located at the subunit interface close to the decoding center, probably blocks exit of the E-site tRNA. This is Small ribosomal subunit protein uS7 from Streptococcus mutans serotype c (strain ATCC 700610 / UA159).